Reading from the N-terminus, the 285-residue chain is Foldase protein PrsA 2 (285 aa).

The N-terminal stretch at methionine 1–alanine 20 is a signal peptide. A lipid anchor (N-palmitoyl cysteine) is attached at cysteine 21. Cysteine 21 carries S-diacylglycerol cysteine lipidation. The PpiC domain occupies lysine 134–aspartate 224.

The protein belongs to the PrsA family.

It is found in the cell membrane. It carries out the reaction [protein]-peptidylproline (omega=180) = [protein]-peptidylproline (omega=0). Plays a major role in protein secretion by helping the post-translocational extracellular folding of several secreted proteins. This chain is Foldase protein PrsA 2 (prsA2), found in Bacillus cereus (strain ATCC 14579 / DSM 31 / CCUG 7414 / JCM 2152 / NBRC 15305 / NCIMB 9373 / NCTC 2599 / NRRL B-3711).